A 179-amino-acid polypeptide reads, in one-letter code: Large ribosomal subunit protein uL10 (179 aa).

Belongs to the universal ribosomal protein uL10 family. In terms of assembly, part of the ribosomal stalk of the 50S ribosomal subunit. The N-terminus interacts with L11 and the large rRNA to form the base of the stalk. The C-terminus forms an elongated spine to which L12 dimers bind in a sequential fashion forming a multimeric L10(L12)X complex.

In terms of biological role, forms part of the ribosomal stalk, playing a central role in the interaction of the ribosome with GTP-bound translation factors. The chain is Large ribosomal subunit protein uL10 from Thermomicrobium roseum (strain ATCC 27502 / DSM 5159 / P-2).